A 130-amino-acid chain; its full sequence is Large ribosomal subunit protein bL19 (130 aa).

The protein belongs to the bacterial ribosomal protein bL19 family.

Functionally, this protein is located at the 30S-50S ribosomal subunit interface and may play a role in the structure and function of the aminoacyl-tRNA binding site. The sequence is that of Large ribosomal subunit protein bL19 from Psychrobacter arcticus (strain DSM 17307 / VKM B-2377 / 273-4).